The sequence spans 313 residues: N-acetyl-gamma-glutamyl-phosphate reductase (313 aa).

Cysteine 117 is an active-site residue.

Belongs to the NAGSA dehydrogenase family. Type 2 subfamily.

The protein resides in the cytoplasm. The catalysed reaction is N-acetyl-L-glutamate 5-semialdehyde + phosphate + NADP(+) = N-acetyl-L-glutamyl 5-phosphate + NADPH + H(+). It participates in amino-acid biosynthesis; L-arginine biosynthesis; N(2)-acetyl-L-ornithine from L-glutamate: step 3/4. Catalyzes the NADPH-dependent reduction of N-acetyl-5-glutamyl phosphate to yield N-acetyl-L-glutamate 5-semialdehyde. The protein is N-acetyl-gamma-glutamyl-phosphate reductase of Burkholderia cenocepacia (strain ATCC BAA-245 / DSM 16553 / LMG 16656 / NCTC 13227 / J2315 / CF5610) (Burkholderia cepacia (strain J2315)).